The chain runs to 803 residues: Exo-1,4-beta-xylosidase xlnD (803 aa).

The signal sequence occupies residues 1 to 18 (MRSLISVAVLSALPTAFS). N-linked (GlcNAc...) asparagine glycosylation is found at Asn21, Asn44, Asn85, Asn122, Asn140, and Asn234. The active site involves Asp307. N-linked (GlcNAc...) asparagine glycans are attached at residues Asn437, Asn474, Asn515, Asn611, Asn676, and Asn698.

The protein belongs to the glycosyl hydrolase 3 family.

It is found in the secreted. It carries out the reaction Hydrolysis of (1-&gt;4)-beta-D-xylans, to remove successive D-xylose residues from the non-reducing termini.. It functions in the pathway glycan degradation; xylan degradation. Xylan 1,4-beta-xylosidase involved in the hydrolysis of xylan, a major structural heterogeneous polysaccharide found in plant biomass representing the second most abundant polysaccharide in the biosphere, after cellulose. The protein is Exo-1,4-beta-xylosidase xlnD (xlnD) of Emericella nidulans (strain FGSC A4 / ATCC 38163 / CBS 112.46 / NRRL 194 / M139) (Aspergillus nidulans).